The primary structure comprises 382 residues: Diphosphomevalonate decarboxylase ERG19 (382 aa).

(R)-5-diphosphomevalonate-binding positions include 22–25 (YWGK), R78, 157–162 (SGSACR), and T213.

Belongs to the diphosphomevalonate decarboxylase family. Homodimer.

It catalyses the reaction (R)-5-diphosphomevalonate + ATP = isopentenyl diphosphate + ADP + phosphate + CO2. The protein operates within isoprenoid biosynthesis; isopentenyl diphosphate biosynthesis via mevalonate pathway; isopentenyl diphosphate from (R)-mevalonate: step 3/3. In terms of biological role, diphosphomevalonate decarboxylase; part of the second module of ergosterol biosynthesis pathway that includes the middle steps of the pathway. MVD1 converts diphosphomevalonate into isopentenyl diphosphate. The second module is carried out in the vacuole and involves the formation of farnesyl diphosphate, which is also an important intermediate in the biosynthesis of ubiquinone, dolichol, heme and prenylated proteins. Activity by the mevalonate kinase ERG12 (FG05912) first converts mevalonate into 5-phosphomevalonate. 5-phosphomevalonate is then further converted to 5-diphosphomevalonate by the phosphomevalonate kinase ERG8 (FG09764). The diphosphomevalonate decarboxylase ERG19 (FG10424) then produces isopentenyl diphosphate. The isopentenyl-diphosphate delta-isomerase IDI1 (FG09722) then catalyzes the 1,3-allylic rearrangement of the homoallylic substrate isopentenyl (IPP) to its highly electrophilic allylic isomer, dimethylallyl diphosphate (DMAPP). Finally the farnesyl diphosphate synthase ERG20 (FG06784) catalyzes the sequential condensation of isopentenyl pyrophosphate with dimethylallyl pyrophosphate, and then with the resultant geranylpyrophosphate to the ultimate product farnesyl pyrophosphate. In Gibberella zeae (strain ATCC MYA-4620 / CBS 123657 / FGSC 9075 / NRRL 31084 / PH-1) (Wheat head blight fungus), this protein is Diphosphomevalonate decarboxylase ERG19.